The primary structure comprises 689 residues: Glycine--tRNA ligase beta subunit (689 aa).

It belongs to the class-II aminoacyl-tRNA synthetase family. In terms of assembly, tetramer of two alpha and two beta subunits.

The protein localises to the cytoplasm. It catalyses the reaction tRNA(Gly) + glycine + ATP = glycyl-tRNA(Gly) + AMP + diphosphate. The polypeptide is Glycine--tRNA ligase beta subunit (Salmonella paratyphi A (strain ATCC 9150 / SARB42)).